Here is a 503-residue protein sequence, read N- to C-terminus: Aminoaldehyde dehydrogenase 1, peroxisomal (503 aa).

Asn27, Ile28, Asp99, and Leu189 together coordinate Na(+). Gly238 to Lys245 provides a ligand contact to NAD(+). The active-site Proton acceptor is the Glu260. Residues Cys294 and Glu393 each contribute to the NAD(+) site. Catalysis depends on Cys294, which acts as the Nucleophile. The short motif at Ser501 to Leu503 is the Microbody targeting signal element.

It belongs to the aldehyde dehydrogenase family. In terms of assembly, forms homodimers.

Its subcellular location is the peroxisome. It carries out the reaction 3-aminopropanal + NAD(+) + H2O = beta-alanine + NADH + 2 H(+). The enzyme catalyses 4-aminobutanal + NAD(+) + H2O = 4-aminobutanoate + NADH + 2 H(+). The catalysed reaction is 4-guanidinobutanal + NAD(+) + H2O = 4-guanidinobutanoate + NADH + 2 H(+). The protein operates within amine and polyamine biosynthesis; betaine biosynthesis via choline pathway; betaine from betaine aldehyde: step 1/1. Its function is as follows. Dehydrogenase that catalyzes the oxidation of several aminoaldehydes. Metabolizes and detoxifies aldehyde products of polyamine degradation to non-toxic amino acids. Catalyzes the oxidation of 3-aminopropanal to beta-alanine. Catalyzes the oxidation of 4-aminobutanal to 4-aminobutanoate. Catalyzes the oxidation of 4-guanidinobutanal to 4-guanidinobutanoate. This chain is Aminoaldehyde dehydrogenase 1, peroxisomal, found in Pisum sativum (Garden pea).